A 303-amino-acid polypeptide reads, in one-letter code: Coenzyme PQQ synthesis protein B (303 aa).

Belongs to the PqqB family.

The protein operates within cofactor biosynthesis; pyrroloquinoline quinone biosynthesis. May be involved in the transport of PQQ or its precursor to the periplasm. This is Coenzyme PQQ synthesis protein B from Pseudomonas entomophila (strain L48).